The following is a 397-amino-acid chain: Lysophospholipid transporter LplT (397 aa).

The Periplasmic portion of the chain corresponds to 1 to 17; that stretch reads MSESVHTNTSLWSKGMK. Residues 18–38 traverse the membrane as a helical segment; that stretch reads AVIVAQFLSAFGDNALLFATL. Topologically, residues 39–52 are cytoplasmic; sequence ALLKAQFYPEWSQP. Residues 53–73 traverse the membrane as a helical segment; sequence VLQMVFVGAYILFAPFVGQVA. Over 74 to 90 the chain is Periplasmic; sequence DSFAKGRVMMFANGLKL. Residues 91–111 form a helical membrane-spanning segment; that stretch reads LGAASICFGFNPFVGYTLVGI. Topologically, residues 112–144 are cytoplasmic; sequence GAAAYSPAKYGILGELTTGDKLVKANGLMEAST. Residues 145–165 traverse the membrane as a helical segment; it reads IAAILLGSVAGGVLADLHVLV. Residue A166 is a topological domain, periplasmic. A helical transmembrane segment spans residues 167–187; the sequence is LAACALAYAGAVAANIYIPKL. At 188–226 the chain is on the cytoplasmic side; sequence AAARPGQSWNVLKMTCSFKSACTSLWQNGETRFSLVGTS. Residues 227 to 247 form a helical membrane-spanning segment; it reads LFWGAGVTLRFLLVLWVPVAL. Residues 248–256 lie on the Periplasmic side of the membrane; sequence GITDNATPT. A helical transmembrane segment spans residues 257 to 277; that stretch reads YLNAMVAIGIVLGAGAAAKLV. At 278 to 280 the chain is on the cytoplasmic side; sequence TLE. The helical transmembrane segment at 281–301 threads the bilayer; it reads TVSRCMPAGILIGVVVLFFSL. Topologically, residues 302-304 are periplasmic; the sequence is QHE. The helical transmembrane segment at 305-325 threads the bilayer; it reads LLPAYALLMLIGVLGGFFVVP. Topologically, residues 326 to 343 are cytoplasmic; the sequence is LNALLQERGKKSVGAGNA. Residues 344-364 form a helical membrane-spanning segment; that stretch reads IAVQNLGENSAMLLMLGIYSL. Residues 365–366 lie on the Periplasmic side of the membrane; the sequence is AV. Residues 367-387 form a helical membrane-spanning segment; sequence LVGIPVVPIGIGFGTLFALAI. Topologically, residues 388-397 are cytoplasmic; the sequence is TALWIWQRRH.

Belongs to the major facilitator superfamily. LplT (TC 2.A.1.42) family.

The protein localises to the cell inner membrane. Its function is as follows. Catalyzes the facilitated diffusion of 2-acyl-glycero-3-phosphoethanolamine (2-acyl-GPE) into the cell. This Escherichia fergusonii (strain ATCC 35469 / DSM 13698 / CCUG 18766 / IAM 14443 / JCM 21226 / LMG 7866 / NBRC 102419 / NCTC 12128 / CDC 0568-73) protein is Lysophospholipid transporter LplT.